The chain runs to 106 residues: uncharacterized protein (106 aa).

Positions Lys38 to Tyr106 are disordered. 2 stretches are compositionally biased toward basic and acidic residues: residues Thr57–Glu71 and Trp82–Ser96.

Its subcellular location is the mitochondrion. This is an uncharacterized protein from Arabidopsis thaliana (Mouse-ear cress).